The following is a 793-amino-acid chain: Serine/threonine-protein kinase MARK1 (793 aa).

The disordered stretch occupies residues 1-40 (MSARTPLPTVNERDTENHTSVDGYTETHIPPTKSSSRQNI). Position 5 is a phosphothreonine (Thr5). In terms of domain architecture, Protein kinase spans 60-311 (YRLQKTIGKG…LEQIMKDRWM (252 aa)). ATP-binding positions include 66–74 (IGKGNFAKV) and Lys89. The active-site Proton acceptor is Asp182. At Thr208 the chain carries Phosphothreonine. Thr215 bears the Phosphothreonine; by LKB1 and TAOK1 mark. Ser219 carries the post-translational modification Phosphoserine; by GSK3-beta. Positions 329–370 (DLNDAKRIDIMVTMGFARDEINDALVSQKYDEVMATYILLGR) constitute a UBA domain. Disordered regions lie at residues 377–499 (GGES…GGSM) and 517–697 (LQNG…KPRS). Polar residues predominate over residues 380-403 (SLSSGNLCQRSRPSSDLNNSTLQS). Ser382, Ser390, Ser393, Ser403, Ser423, and Ser444 each carry phosphoserine. The span at 447-459 (SEQKEEWDKDTAR) shows a compositional bias: basic and acidic residues. The segment covering 462–473 (GSTTVGSKSEVT) has biased composition (polar residues). Ser475 carries the phosphoserine modification. A compositionally biased stretch (polar residues) spans 487 to 499 (AGPSNNVYSGGSM). Composition is skewed to low complexity over residues 523–547 (SSLT…GPSA) and 585–599 (PAAS…ASTP). A Phosphoserine modification is found at Ser588. Thr613 is modified (phosphothreonine; by PKC/PRKCZ). A compositionally biased stretch (polar residues) spans 647–657 (GTSTGIISKIT). Basic and acidic residues-rich tracts occupy residues 661–676 (VRRD…RTDT) and 683–695 (EPKD…EAKP). Ser666 is modified (phosphoserine). The 50-residue stretch at 744-793 (DARQDSLVQWEMEVCKLPRLSLNGVRFKRISGTSIAFKNIASKIANELKL) folds into the KA1 domain.

The protein belongs to the protein kinase superfamily. CAMK Ser/Thr protein kinase family. SNF1 subfamily. In terms of assembly, interacts with MAPT/TAU. It depends on Mg(2+) as a cofactor. Phosphorylation at Thr-613 by PRKCZ/aPKC in polarized epithelial cells inhibits the kinase activity. Phosphorylated at Thr-215 by STK11/LKB1 in complex with STE20-related adapter-alpha (STRADA) pseudo kinase and CAB39. Phosphorylation at Thr-215 by TAOK1 activates the kinase activity, leading to phosphorylation and detachment of MAPT/TAU from microtubules. Phosphorylation at Ser-219 by GSK3-beta (GSK3B) inhibits the kinase activity. Highly expressed in brain and spleen and at lower levels in kidney and skeletal muscle.

Its subcellular location is the cell membrane. The protein localises to the cytoplasm. It localises to the cytoskeleton. It is found in the cell projection. The protein resides in the dendrite. It carries out the reaction L-seryl-[protein] + ATP = O-phospho-L-seryl-[protein] + ADP + H(+). It catalyses the reaction L-threonyl-[protein] + ATP = O-phospho-L-threonyl-[protein] + ADP + H(+). The enzyme catalyses L-seryl-[tau protein] + ATP = O-phospho-L-seryl-[tau protein] + ADP + H(+). The catalysed reaction is L-threonyl-[tau protein] + ATP = O-phospho-L-threonyl-[tau protein] + ADP + H(+). Activated by phosphorylation on Thr-215. Inhibited by phosphorylation at Ser-219. Functionally, serine/threonine-protein kinase. Involved in cell polarity and microtubule dynamics regulation. Phosphorylates DCX, MAP2 and MAP4. Phosphorylates the microtubule-associated protein MAPT/TAU. Involved in cell polarity by phosphorylating the microtubule-associated proteins MAP2, MAP4 and MAPT/TAU at KXGS motifs, causing detachment from microtubules, and their disassembly. Involved in the regulation of neuronal migration through its dual activities in regulating cellular polarity and microtubule dynamics, possibly by phosphorylating and regulating DCX. Also acts as a positive regulator of the Wnt signaling pathway, probably by mediating phosphorylation of dishevelled proteins (DVL1, DVL2 and/or DVL3). This is Serine/threonine-protein kinase MARK1 from Rattus norvegicus (Rat).